We begin with the raw amino-acid sequence, 317 residues long: Methionyl-tRNA formyltransferase (317 aa).

111–114 (SLLP) is a (6S)-5,6,7,8-tetrahydrofolate binding site.

This sequence belongs to the Fmt family.

It catalyses the reaction L-methionyl-tRNA(fMet) + (6R)-10-formyltetrahydrofolate = N-formyl-L-methionyl-tRNA(fMet) + (6S)-5,6,7,8-tetrahydrofolate + H(+). Its function is as follows. Attaches a formyl group to the free amino group of methionyl-tRNA(fMet). The formyl group appears to play a dual role in the initiator identity of N-formylmethionyl-tRNA by promoting its recognition by IF2 and preventing the misappropriation of this tRNA by the elongation apparatus. This chain is Methionyl-tRNA formyltransferase, found in Chlorobium phaeobacteroides (strain BS1).